The chain runs to 417 residues: Protein FAM181B (417 aa).

Residues 104–147 (CSGLMGTAPPRPASPSAADAPAKRPPGAPTVATPAHCKAAPRRE) form a disordered region.

This sequence belongs to the FAM181 family.

The protein is Protein FAM181B (Fam181b) of Mus musculus (Mouse).